The chain runs to 282 residues: Elongation factor Ts (282 aa).

The segment at 80-83 (TDFV) is involved in Mg(2+) ion dislocation from EF-Tu.

This sequence belongs to the EF-Ts family.

It is found in the cytoplasm. Functionally, associates with the EF-Tu.GDP complex and induces the exchange of GDP to GTP. It remains bound to the aminoacyl-tRNA.EF-Tu.GTP complex up to the GTP hydrolysis stage on the ribosome. The polypeptide is Elongation factor Ts (tsf) (Chlamydia pneumoniae (Chlamydophila pneumoniae)).